A 119-amino-acid polypeptide reads, in one-letter code: Odin profilin (119 aa).

The protein belongs to the Asgard profilin family.

It is found in the cytoplasm. The protein resides in the cytoskeleton. With respect to regulation, inhibition of rabbit actin polymerization is reduced by phosphatidylinositol-(4,5)-P2(1,2-dipalmitoyl), a soluble form of the phospholipid phosphatidylinositol, suggesting an unknown lipid might regulate actin-profilin interaction in vivo. Binds to actin and affects the structure of the cytoskeleton. At high concentrations inhibits spontaneous rabbit actin nucleation. This strongly suggests this archaea has a profilin-regulated actin system, and actin-type genes can be identified in this organism. The sequence is that of Odin profilin from Odinarchaeota yellowstonii (strain LCB_4).